Consider the following 526-residue polypeptide: Tyrosine-protein kinase transforming protein Src (526 aa).

The disordered stretch occupies residues 1 to 52 (MGSSKSKPKDPSQRRHSLEPPDSTHHGGFPASQTPDETAAPDAHRNPSRSFG). Gly-2 is lipidated: N-myristoyl glycine; by host. Positions 7–25 (KPKDPSQRRHSLEPPDSTH) are enriched in basic and acidic residues. 2 SH3 domains span residues 71 to 139 (TSPQ…YVAP) and 81 to 142 (GGVT…PSDS). The SH2 domain occupies 148–245 (WYFGKITRRE…GLCHRLANVC (98 aa)). The region spanning 267–517 (LRLEAKLGQG…TFKYLQAQLL (251 aa)) is the Protein kinase domain. ATP-binding positions include 273–281 (LGQGCFGEV) and Lys-295. Residue Asp-386 is the Proton acceptor of the active site. Tyr-416 carries the post-translational modification Phosphotyrosine; by autocatalysis.

Belongs to the protein kinase superfamily. Tyr protein kinase family. SRC subfamily. As to quaternary structure, homodimer. In terms of processing, the phosphorylated form is termed pp60v-src.

The catalysed reaction is L-tyrosyl-[protein] + ATP = O-phospho-L-tyrosyl-[protein] + ADP + H(+). Its function is as follows. This phosphoprotein, required for both the initiation and the maintenance of neoplastic transformation, is a protein kinase that catalyzes the phosphorylation of tyrosine residues in vitro. The protein is Tyrosine-protein kinase transforming protein Src (V-SRC) of Gallus gallus (Chicken).